Here is a 94-residue protein sequence, read N- to C-terminus: Large ribosomal subunit protein bL25 (94 aa).

The protein belongs to the bacterial ribosomal protein bL25 family. In terms of assembly, part of the 50S ribosomal subunit; part of the 5S rRNA/L5/L18/L25 subcomplex. Contacts the 5S rRNA. Binds to the 5S rRNA independently of L5 and L18.

This is one of the proteins that binds to the 5S RNA in the ribosome where it forms part of the central protuberance. This Edwardsiella ictaluri (strain 93-146) protein is Large ribosomal subunit protein bL25.